The sequence spans 87 residues: uncharacterized protein (87 aa).

The next 2 helical transmembrane spans lie at 8–28 and 47–67; these read IVVL…IFDL and LAGS…LIGL.

The protein localises to the cell membrane. This is an uncharacterized protein from Bacillus subtilis (strain 168).